The primary structure comprises 321 residues: Probable arabinan endo-1,5-alpha-L-arabinosidase A (321 aa).

Positions 1–19 (MHPSTFVTTIACLAGLAHG) are cleaved as a signal peptide. Asp34 serves as the catalytic Proton acceptor. Glu200 serves as the catalytic Proton donor.

Belongs to the glycosyl hydrolase 43 family.

It localises to the secreted. The enzyme catalyses Endohydrolysis of (1-&gt;5)-alpha-arabinofuranosidic linkages in (1-&gt;5)-arabinans.. It participates in glycan metabolism; L-arabinan degradation. In terms of biological role, endo-1,5-alpha-L-arabinanase involved in degradation of pectin. Its preferred substrate is linear 1,5-alpha-L-arabinan. The chain is Probable arabinan endo-1,5-alpha-L-arabinosidase A (abnA) from Aspergillus clavatus (strain ATCC 1007 / CBS 513.65 / DSM 816 / NCTC 3887 / NRRL 1 / QM 1276 / 107).